Here is a 249-residue protein sequence, read N- to C-terminus: 5'-nucleotidase SurE (249 aa).

A divalent metal cation-binding residues include Asp8, Asp9, Ser39, and Asn91.

The protein belongs to the SurE nucleotidase family. A divalent metal cation is required as a cofactor.

The protein localises to the cytoplasm. It catalyses the reaction a ribonucleoside 5'-phosphate + H2O = a ribonucleoside + phosphate. In terms of biological role, nucleotidase that shows phosphatase activity on nucleoside 5'-monophosphates. The chain is 5'-nucleotidase SurE from Ectopseudomonas mendocina (strain ymp) (Pseudomonas mendocina).